Reading from the N-terminus, the 413-residue chain is Tyrosine--tRNA ligase (413 aa).

A 'HIGH' region motif is present at residues 60–69 (PTAPDIHIGH). A 'KMSKS' region motif is present at residues 244-248 (KMSKS). Lys-247 provides a ligand contact to ATP. The region spanning 352–412 (LGIAQLLKQA…GKRRFARVTL (61 aa)) is the S4 RNA-binding domain.

The protein belongs to the class-I aminoacyl-tRNA synthetase family. TyrS type 2 subfamily. Homodimer.

Its subcellular location is the cytoplasm. The catalysed reaction is tRNA(Tyr) + L-tyrosine + ATP = L-tyrosyl-tRNA(Tyr) + AMP + diphosphate + H(+). Its function is as follows. Catalyzes the attachment of tyrosine to tRNA(Tyr) in a two-step reaction: tyrosine is first activated by ATP to form Tyr-AMP and then transferred to the acceptor end of tRNA(Tyr). The polypeptide is Tyrosine--tRNA ligase (Cupriavidus pinatubonensis (strain JMP 134 / LMG 1197) (Cupriavidus necator (strain JMP 134))).